An 81-amino-acid polypeptide reads, in one-letter code: Short neurotoxin 1 (81 aa).

Residues 1 to 21 (MKTLLLTLVVVTIVCLDLGYT) form the signal peptide. Disulfide bonds link cysteine 24–cysteine 43, cysteine 38–cysteine 60, cysteine 62–cysteine 73, and cysteine 74–cysteine 79.

It belongs to the three-finger toxin family. Short-chain subfamily. Type I alpha-neurotoxin sub-subfamily. Expressed by the venom gland.

It is found in the secreted. Functionally, binds to muscle nicotinic acetylcholine receptor (nAChR) and inhibit acetylcholine from binding to the receptor, thereby impairing neuromuscular transmission. The polypeptide is Short neurotoxin 1 (Tropidechis carinatus (Australian rough-scaled snake)).